The sequence spans 330 residues: Exostosin-like 2 (330 aa).

Residues 1–21 (MMRGCHICKLPGRVMGIRVLR) are Cytoplasmic-facing. A helical; Signal-anchor for type II membrane protein membrane pass occupies residues 22-42 (FSLVVILVLLLVAGALTNLLP). The Lumenal segment spans residues 43 to 330 (NIKEDKMLTL…FPYANHKSKM (288 aa)). Residue Gln-72 coordinates UDP-N-acetyl-alpha-D-galactosamine. Gln-72 serves as a coordination point for UDP-N-acetyl-alpha-D-glucosamine. N-linked (GlcNAc...) asparagine glycosylation is present at Asn-75. UDP-N-acetyl-alpha-D-galactosamine is bound by residues Arg-76, Asn-101, Asn-130, Arg-135, Asp-151, Asp-152, Asp-153, and Asp-245. Arg-76, Asn-101, Asn-130, Arg-135, Asp-151, Asp-152, Asp-153, Asp-245, Asp-246, and Arg-293 together coordinate UDP-N-acetyl-alpha-D-glucosamine. Asp-153 is a Mn(2+) binding site. The cysteines at positions 244 and 296 are disulfide-linked. Asp-246 is an active-site residue. Arg-293 contacts UDP-N-acetyl-alpha-D-galactosamine.

The protein belongs to the glycosyltransferase 47 family. Requires Mn(2+) as cofactor.

The protein localises to the endoplasmic reticulum membrane. The enzyme catalyses 3-O-(beta-D-GlcA-(1-&gt;3)-beta-D-Gal-(1-&gt;3)-beta-D-Gal-(1-&gt;4)-beta-D-Xyl)-L-seryl-[protein] + UDP-N-acetyl-alpha-D-glucosamine = 3-O-(alpha-D-GlcNAc-(1-&gt;4)-beta-D-GlcA-(1-&gt;3)-beta-D-Gal-(1-&gt;3)-beta-D-Gal-(1-&gt;4)-beta-D-Xyl)-L-seryl-[protein] + UDP + H(+). Its function is as follows. Glycosyltransferase required for the biosynthesis of heparan-sulfate and responsible for the alternating addition of beta-1-4-linked glucuronic acid (GlcA) and alpha-1-4-linked N-acetylglucosamine (GlcNAc) units to nascent heparan sulfate chains. This chain is Exostosin-like 2 (Extl2), found in Mus musculus (Mouse).